The chain runs to 203 residues: Probable nicotinate-nucleotide adenylyltransferase (203 aa).

Belongs to the NadD family.

The catalysed reaction is nicotinate beta-D-ribonucleotide + ATP + H(+) = deamido-NAD(+) + diphosphate. Its pathway is cofactor biosynthesis; NAD(+) biosynthesis; deamido-NAD(+) from nicotinate D-ribonucleotide: step 1/1. Its function is as follows. Catalyzes the reversible adenylation of nicotinate mononucleotide (NaMN) to nicotinic acid adenine dinucleotide (NaAD). This chain is Probable nicotinate-nucleotide adenylyltransferase, found in Prosthecochloris aestuarii (strain DSM 271 / SK 413).